The primary structure comprises 219 residues: Large ribosomal subunit protein bL25 (219 aa).

Residues 176–219 are disordered; it reads VTVVPPTDEPSEEEVEAMEGESATEEPEVVGEDKEDDEEENKED. A compositionally biased stretch (acidic residues) spans 184–219; the sequence is EPSEEEVEAMEGESATEEPEVVGEDKEDDEEENKED.

The protein belongs to the bacterial ribosomal protein bL25 family. CTC subfamily. Part of the 50S ribosomal subunit; part of the 5S rRNA/L5/L18/L25 subcomplex. Contacts the 5S rRNA. Binds to the 5S rRNA independently of L5 and L18.

Functionally, this is one of the proteins that binds to the 5S RNA in the ribosome where it forms part of the central protuberance. In Staphylococcus epidermidis (strain ATCC 35984 / DSM 28319 / BCRC 17069 / CCUG 31568 / BM 3577 / RP62A), this protein is Large ribosomal subunit protein bL25.